The chain runs to 375 residues: Probable pectin lyase B (375 aa).

The N-terminal stretch at 1 to 19 is a signal peptide; the sequence is MKYAAFLPTIGALVSQAIA. Cystine bridges form between cysteine 82–cysteine 101 and cysteine 91–cysteine 225. An N-linked (GlcNAc...) asparagine glycan is attached at asparagine 128. Arginine 255 is a catalytic residue. Residues cysteine 321 and cysteine 329 are joined by a disulfide bond.

It belongs to the polysaccharide lyase 1 family.

It is found in the secreted. It catalyses the reaction Eliminative cleavage of (1-&gt;4)-alpha-D-galacturonan methyl ester to give oligosaccharides with 4-deoxy-6-O-methyl-alpha-D-galact-4-enuronosyl groups at their non-reducing ends.. In terms of biological role, pectinolytic enzymes consist of four classes of enzymes: pectin lyase, polygalacturonase, pectin methylesterase and rhamnogalacturonase. Among pectinolytic enzymes, pectin lyase is the most important in depolymerization of pectin, since it cleaves internal glycosidic bonds of highly methylated pectins. This is Probable pectin lyase B (pelB) from Aspergillus fumigatus (strain CBS 144.89 / FGSC A1163 / CEA10) (Neosartorya fumigata).